The sequence spans 165 residues: 6,7-dimethyl-8-ribityllumazine synthase 2 (165 aa).

5-amino-6-(D-ribitylamino)uracil contacts are provided by residues Trp-24, 56–58 (SFE), and 80–82 (LVV). Arg-88 serves as the catalytic Proton donor. Residue Ser-113 coordinates 5-amino-6-(D-ribitylamino)uracil. His-127 is a (2S)-2-hydroxy-3-oxobutyl phosphate binding site.

It belongs to the DMRL synthase family.

It catalyses the reaction (2S)-2-hydroxy-3-oxobutyl phosphate + 5-amino-6-(D-ribitylamino)uracil = 6,7-dimethyl-8-(1-D-ribityl)lumazine + phosphate + 2 H2O + H(+). It participates in cofactor biosynthesis; riboflavin biosynthesis; riboflavin from 2-hydroxy-3-oxobutyl phosphate and 5-amino-6-(D-ribitylamino)uracil: step 1/2. Its function is as follows. Catalyzes the formation of 6,7-dimethyl-8-ribityllumazine by condensation of 5-amino-6-(D-ribitylamino)uracil with 3,4-dihydroxy-2-butanone 4-phosphate. This is the penultimate step in the biosynthesis of riboflavin. The chain is 6,7-dimethyl-8-ribityllumazine synthase 2 from Bradyrhizobium diazoefficiens (strain JCM 10833 / BCRC 13528 / IAM 13628 / NBRC 14792 / USDA 110).